The primary structure comprises 279 residues: Oxygen-dependent coproporphyrinogen-III oxidase (279 aa).

Ser-102 lines the substrate pocket. The a divalent metal cation site is built by His-106 and His-116. His-116 (proton donor) is an active-site residue. 118-120 (NTR) is a substrate binding site. His-149 and His-179 together coordinate a divalent metal cation. The interval 244–279 (YVEFNLLYDRGTKFGLMTDGNVEAILMSLPPVVKFN) is important for dimerization.

This sequence belongs to the aerobic coproporphyrinogen-III oxidase family. Homodimer. Requires a divalent metal cation as cofactor.

It localises to the cytoplasm. The enzyme catalyses coproporphyrinogen III + O2 + 2 H(+) = protoporphyrinogen IX + 2 CO2 + 2 H2O. It functions in the pathway porphyrin-containing compound metabolism; protoporphyrin-IX biosynthesis; protoporphyrinogen-IX from coproporphyrinogen-III (O2 route): step 1/1. Involved in the heme biosynthesis. Catalyzes the aerobic oxidative decarboxylation of propionate groups of rings A and B of coproporphyrinogen-III to yield the vinyl groups in protoporphyrinogen-IX. The chain is Oxygen-dependent coproporphyrinogen-III oxidase from Rickettsia prowazekii (strain Madrid E).